The primary structure comprises 327 residues: Mitochondrial carnitine carrier (327 aa).

Over residues 1–11 (MSSDTSLSESS) the composition is skewed to low complexity. Positions 1-29 (MSSDTSLSESSLLKEESGSLTKSRPPIKS) are disordered. The next 6 membrane-spanning stretches (helical) occupy residues 33 to 49 (RENIKSFVAGGVGGVCA), 107 to 123 (LGVTPIFAVSFWGYDVG), 141 to 162 (MGQMAAAGFISAIPTTLVTAPT), 196 to 212 (GSLATLARDGPGSALYF), 244 to 260 (LAGGIAGMSMWLAVFPI), and 293 to 313 (FFPGLGPALLRSFPANAATFL). 3 Solcar repeats span residues 33–126 (RENI…GKKL), 139–221 (LTMG…SKNY), and 237–321 (VNIL…THSL).

It belongs to the mitochondrial carrier (TC 2.A.29) family.

It localises to the mitochondrion inner membrane. Its function is as follows. Transports carnitine, acetylcarnitine, propionylcarnitine and to a much lower extent medium- and long-chain acylcarnitines. In Saccharomyces cerevisiae (strain ATCC 204508 / S288c) (Baker's yeast), this protein is Mitochondrial carnitine carrier (CRC1).